Reading from the N-terminus, the 194-residue chain is MNKQKNNRERTPQPEQDTERDEQLTNSHENDIDSAPAAEENDKVADPVEELTAQLAALNDTHLRLMAEYDNYRKRTLKEKSELIRNGGEKVLVDLLPVIDDFERALSNLGDMSEPAAIKGGVELIYSKFMDYLQKQGVKKIETADLPFDADLCDAVAMIPAPSAEQKGKVIDCVKTGYTLNDKVIRHAHVVVGE.

The span at M1–P12 shows a compositional bias: basic and acidic residues. The interval M1–V44 is disordered.

The protein belongs to the GrpE family. Homodimer.

It is found in the cytoplasm. Its function is as follows. Participates actively in the response to hyperosmotic and heat shock by preventing the aggregation of stress-denatured proteins, in association with DnaK and GrpE. It is the nucleotide exchange factor for DnaK and may function as a thermosensor. Unfolded proteins bind initially to DnaJ; upon interaction with the DnaJ-bound protein, DnaK hydrolyzes its bound ATP, resulting in the formation of a stable complex. GrpE releases ADP from DnaK; ATP binding to DnaK triggers the release of the substrate protein, thus completing the reaction cycle. Several rounds of ATP-dependent interactions between DnaJ, DnaK and GrpE are required for fully efficient folding. The chain is Protein GrpE from Porphyromonas gingivalis (strain ATCC 33277 / DSM 20709 / CIP 103683 / JCM 12257 / NCTC 11834 / 2561).